Here is a 469-residue protein sequence, read N- to C-terminus: Protein RdxA (469 aa).

Topologically, residues 1-23 are cytoplasmic; sequence MSEPLYAPRTPIFPRQISGAFRT. The helical transmembrane segment at 24–44 threads the bilayer; that stretch reads AKWWILAVSLGIYLLTPWLRW. Residues 45 to 75 lie on the Periplasmic side of the membrane; the sequence is DRGPNLPDQAVLIDIAGRRFFLFGIQIWPHE. The helical transmembrane segment at 76 to 96 threads the bilayer; it reads FYFVAGLLIMAGLGLFLFTSA. At 97–149 the chain is on the cytoplasmic side; it reads AGRVWCGYACPQTVWTDLFLLVERRIEGDRNAQIRLHRQAWTAEKVWKRLLKW. Residues 150 to 170 form a helical membrane-spanning segment; the sequence is SVWAAISLLTGGAWVFYFADA. At 171 to 183 the chain is on the periplasmic side; the sequence is PTLLNGLVTLTAH. Residues 184 to 204 form a helical membrane-spanning segment; that stretch reads PVAWITIFVLTATTFVFAGFM. Residues 205–327 lie on the Cytoplasmic side of the membrane; that stretch reads REQICIYACP…PAWRRLFRLR (123 aa). 4Fe-4S ferredoxin-type domains are found at residues 242–270 and 266–295; these read KRSE…IREG and DIRE…IGRP. The [4Fe-4S] cluster site is built by cysteine 251, cysteine 254, cysteine 257, cysteine 261, cysteine 275, cysteine 278, cysteine 281, and cysteine 285. The helical transmembrane segment at 328–348 threads the bilayer; the sequence is TSLYAVLWAGVGVTLIAALLL. At 349-469 the chain is on the periplasmic side; it reads RPAVDLAVTP…VKAAFHGARS (121 aa).

The protein localises to the cell membrane. In terms of biological role, predicted to be involved in a redox process. The protein is Protein RdxA (rdxA) of Cereibacter sphaeroides (strain ATCC 17023 / DSM 158 / JCM 6121 / CCUG 31486 / LMG 2827 / NBRC 12203 / NCIMB 8253 / ATH 2.4.1.) (Rhodobacter sphaeroides).